Here is a 375-residue protein sequence, read N- to C-terminus: 23S rRNA (uracil(747)-C(5))-methyltransferase RlmC (375 aa).

Residues Cys3, Cys11, Cys14, and Cys87 each coordinate [4Fe-4S] cluster. S-adenosyl-L-methionine-binding residues include Gln212, Phe241, Glu262, and Asn307. Cys334 (nucleophile) is an active-site residue.

The protein belongs to the class I-like SAM-binding methyltransferase superfamily. RNA M5U methyltransferase family. RlmC subfamily.

The enzyme catalyses uridine(747) in 23S rRNA + S-adenosyl-L-methionine = 5-methyluridine(747) in 23S rRNA + S-adenosyl-L-homocysteine + H(+). Catalyzes the formation of 5-methyl-uridine at position 747 (m5U747) in 23S rRNA. The chain is 23S rRNA (uracil(747)-C(5))-methyltransferase RlmC from Shigella dysenteriae serotype 1 (strain Sd197).